The chain runs to 560 residues: Membrane protein insertase YidC (560 aa).

A run of 6 helical transmembrane segments spans residues 5–25 (IINLIAAIILSLSIIFGWQYF), 334–354 (AIDFGWFYIITKPVFYAMNFF), 357–377 (YVGNFGVSILIVTVIIKLLMF), 431–451 (LPILVQIPVFFSIYKVLYVTI), 476–496 (LFGLLPFAPPSFLMIGAWPIL), and 522–542 (FMPLIFLFMFSSFPVGLLIYW).

Belongs to the OXA1/ALB3/YidC family. Type 1 subfamily. As to quaternary structure, interacts with the Sec translocase complex via SecD. Specifically interacts with transmembrane segments of nascent integral membrane proteins during membrane integration.

It localises to the cell inner membrane. Functionally, required for the insertion and/or proper folding and/or complex formation of integral membrane proteins into the membrane. Involved in integration of membrane proteins that insert both dependently and independently of the Sec translocase complex, as well as at least some lipoproteins. Aids folding of multispanning membrane proteins. This Rickettsia rickettsii (strain Iowa) protein is Membrane protein insertase YidC.